Here is a 364-residue protein sequence, read N- to C-terminus: Small ribosomal subunit biogenesis GTPase RsgA (364 aa).

The CP-type G domain maps to 101 to 264 (KGLVEKPGVP…VIDTPGLREL (164 aa)). Residues 154–157 (NKSD) and 206–214 (GSSGAGKST) each bind GTP. Cys-288, Cys-293, His-295, and Cys-301 together coordinate Zn(2+). Residues 339 to 364 (QVAQKRKRKTIPRQGKRWRREHGDGQ) are disordered. Residues 342–358 (QKRKRKTIPRQGKRWRR) show a composition bias toward basic residues.

Belongs to the TRAFAC class YlqF/YawG GTPase family. RsgA subfamily. Monomer. Associates with 30S ribosomal subunit, binds 16S rRNA. It depends on Zn(2+) as a cofactor.

It localises to the cytoplasm. In terms of biological role, one of several proteins that assist in the late maturation steps of the functional core of the 30S ribosomal subunit. Helps release RbfA from mature subunits. May play a role in the assembly of ribosomal proteins into the subunit. Circularly permuted GTPase that catalyzes slow GTP hydrolysis, GTPase activity is stimulated by the 30S ribosomal subunit. The chain is Small ribosomal subunit biogenesis GTPase RsgA from Syntrophotalea carbinolica (strain DSM 2380 / NBRC 103641 / GraBd1) (Pelobacter carbinolicus).